A 344-amino-acid polypeptide reads, in one-letter code: Uroporphyrinogen decarboxylase (344 aa).

Residues 26-30 (RQAGR), F45, D75, Y151, S206, and H320 each bind substrate.

Belongs to the uroporphyrinogen decarboxylase family. In terms of assembly, homodimer.

It localises to the cytoplasm. It carries out the reaction uroporphyrinogen III + 4 H(+) = coproporphyrinogen III + 4 CO2. It participates in porphyrin-containing compound metabolism; protoporphyrin-IX biosynthesis; coproporphyrinogen-III from 5-aminolevulinate: step 4/4. Its function is as follows. Catalyzes the decarboxylation of four acetate groups of uroporphyrinogen-III to yield coproporphyrinogen-III. The protein is Uroporphyrinogen decarboxylase of Staphylococcus haemolyticus (strain JCSC1435).